The following is a 340-amino-acid chain: TATA-box-binding protein (340 aa).

Positions 1–78 (MNLNSPAVSM…HSLQGSSMQM (78 aa)) are disordered. The segment covering 57-68 (PQSIQPMQSQQM) has biased composition (low complexity). Residues 69–78 (HSLQGSSMQM) show a composition bias toward polar residues. Repeat copies occupy residues 168–244 (LQNI…ARIV) and 258–335 (VQNM…YPIL).

It belongs to the TBP family. As to quaternary structure, component of the TFIID basal transcription factor complex, composed of TATA-box-binding protein tbp-1, and a number of TBP-associated factors (TAFs). Binds DNA as monomer.

Its subcellular location is the nucleus. The TFIID basal transcription factor complex plays a major role in the initiation of RNA polymerase II (Pol II)-dependent transcription. TFIID recognizes and binds promoters via its subunit tbp-1, a TATA-box-binding protein, and promotes assembly of the pre-initiation complex (PIC). The TFIID complex consists of tbp-1 and TBP-associated factors (TAFs). General transcription factor that functions at the core of the TFIID complex. This chain is TATA-box-binding protein (tbp-1), found in Caenorhabditis elegans.